Consider the following 395-residue polypeptide: MVSAAGLSGDGKMRGVLLVLLGLLYSSTSCGVQKASVFYGPDPKEGLVSSMEFPWVVSLQDSQYTHLAFGCILSEFWVLSIASAIQNRKDIVVIVGISNMDPSKIAHTEYPVNTIIIHEDFDNNSMSNNIALLKTDTAMHFGNLVQSICFLGRMLHTPPVLQNCWVSGWNPTSATGNHMTMSVLRKIFVKDLDMCPLYKLQKTECGSHTKEETKTACLGDPGSPMMCQLQQFDLWVLRGVLNFGGETCPGLFLYTKVEDYSKWITSKAERAGPPLSSLHHWEKLISFSHHGPNATMTQKTYSDSELGHVGSYLQGQRRTITHSRLGNSSRDSLDVREKDVKESGRSPEASVQPLYYDYYGGEVGEGRIFAGQNRLYQPEEIILVSFVLVFFCSSI.

Residues 1–30 (MVSAAGLSGDGKMRGVLLVLLGLLYSSTSC) form the signal peptide. In terms of domain architecture, Peptidase S1 spans 37–269 (VFYGPDPKEG…YSKWITSKAE (233 aa)). Asn123 is a glycosylation site (N-linked (GlcNAc...) asparagine). Intrachain disulfides connect Cys164/Cys227, Cys195/Cys205, and Cys217/Cys248. The segment at 324–348 (RLGNSSRDSLDVREKDVKESGRSPE) is disordered. The N-linked (GlcNAc...) asparagine glycan is linked to Asn327. Basic and acidic residues predominate over residues 331 to 345 (DSLDVREKDVKESGR).

Belongs to the peptidase S1 family. Plasma kallikrein subfamily.

Its subcellular location is the secreted. In Homo sapiens (Human), this protein is Inactive serine protease 54 (PRSS54).